The following is a 311-amino-acid chain: MSTTLPDIAVTEPSALHAPLRWVGMQDIAIPVRLDEAEPSGTVAARAQVQVDLPRPELKGIHMSRLYRLLDRHLEQPLSPAMLSQLLQAMIDSHADCGSRAARVSLAFEVMLRMPALRSEGLAGWRAYPVRIDAQSRAGRSEMRLQIDVLYASTCPCSAALSRQLLSKAFAQQHAGQTALRVEDVAQWLQRNGSYATPHSQRSVAQVRVDLVARVQSFDIRALVLLCESALATPVQAAVRRIDEQAFARLNGANLMYVEDAARRLRKELAERYASFHVAVRHFESLHAHDAVAETGSDADVFHMIAESHGQ.

This sequence belongs to the GTP cyclohydrolase IV family.

It carries out the reaction GTP + H2O = 7,8-dihydroneopterin 3'-triphosphate + formate + H(+). It functions in the pathway cofactor biosynthesis; 7,8-dihydroneopterin triphosphate biosynthesis; 7,8-dihydroneopterin triphosphate from GTP: step 1/1. Converts GTP to 7,8-dihydroneopterin triphosphate. The protein is GTP cyclohydrolase FolE2 of Xanthomonas campestris pv. campestris (strain 8004).